The following is a 170-amino-acid chain: uncharacterized protein (170 aa).

Residues 8–167 (LLIREFEFKD…DEYYYAILEE (160 aa)) enclose the N-acetyltransferase domain.

It belongs to the acetyltransferase family.

This is an uncharacterized protein from Bacillus subtilis (strain 168).